The sequence spans 362 residues: P2Y purinoceptor 1 (362 aa).

Topologically, residues 1-40 are extracellular; the sequence is MTEALISAALNGTQPELLAGGWAAGNATTKCSLTKTGFQF. N11 and N26 each carry an N-linked (GlcNAc...) asparagine glycan. 2 disulfide bridges follow: C31/C285 and C113/C191. K35 lines the ADP pocket. Residues 41–63 form a helical membrane-spanning segment; sequence YYLPTVYILVFITGFLGNSVAIW. At 64–76 the chain is on the cytoplasmic side; the sequence is MFVFHMRPWSGIS. A helical membrane pass occupies residues 77 to 98; sequence VYMFNLALADFLYVLTLPALIF. Residues 99 to 114 are Extracellular-facing; sequence YYFNKTDWIFGDVMCK. N102 is a glycosylation site (N-linked (GlcNAc...) asparagine). The chain crosses the membrane as a helical span at residues 115 to 136; the sequence is LQRFIFHVNLYGSILFLTCISV. Topologically, residues 137–155 are cytoplasmic; it reads HRYTGVVHPLKSLGRLKKK. The chain crosses the membrane as a helical span at residues 156–177; that stretch reads NAVYVSSLVWALVVAVIAPILF. The Extracellular segment spans residues 178–203; the sequence is YSGTGVRRNKTITCYDTTADEYLRSY. An N-linked (GlcNAc...) asparagine glycan is attached at N186. 192-194 contacts ADP; it reads YDT. A helical membrane pass occupies residues 204 to 226; sequence FVYSMCTTVFMFCIPFIVILGCY. Residues 227-249 lie on the Cytoplasmic side of the membrane; that stretch reads GLIVKALIYKDLDNSPLRRKSIY. The chain crosses the membrane as a helical span at residues 250 to 273; sequence LVIIVLTVFAVSYLPFHVMKTLNL. Residues 272-276, 292-295, and R299 contribute to the ADP site; these read NLRAR and YATY. Residues 274–292 lie on the Extracellular side of the membrane; sequence RARLDFQTPQMCAFNDKVY. A helical membrane pass occupies residues 293-314; that stretch reads ATYQVTRGLASLNSCVDPILYF. The Cytoplasmic portion of the chain corresponds to 315 to 362; the sequence is LAGDTFRRRLSRATRKSSRRSEPNVQSKSEEMTLNILTEYKQNGDTSL.

This sequence belongs to the G-protein coupled receptor 1 family. In terms of tissue distribution, brain, spinal cord, gastrointestinal tract, spleen and leg muscle. Is not detected in the heart, liver, stomach, lung and kidney.

Its subcellular location is the cell membrane. Receptor for extracellular adenine nucleotides such as ADP. In platelets, binding to ADP leads to mobilization of intracellular calcium ions via activation of phospholipase C, a change in platelet shape, and ultimately platelet aggregation. This chain is P2Y purinoceptor 1 (P2RY1), found in Gallus gallus (Chicken).